Consider the following 240-residue polypeptide: Proteasome subunit alpha (240 aa).

Belongs to the peptidase T1A family. The 20S proteasome core is composed of 14 alpha and 14 beta subunits that assemble into four stacked heptameric rings, resulting in a barrel-shaped structure. The two inner rings, each composed of seven catalytic beta subunits, are sandwiched by two outer rings, each composed of seven alpha subunits. The catalytic chamber with the active sites is on the inside of the barrel. Has a gated structure, the ends of the cylinder being occluded by the N-termini of the alpha-subunits. Is capped at one or both ends by the proteasome regulatory ATPase, PAN.

It is found in the cytoplasm. With respect to regulation, the formation of the proteasomal ATPase PAN-20S proteasome complex, via the docking of the C-termini of PAN into the intersubunit pockets in the alpha-rings, triggers opening of the gate for substrate entry. Interconversion between the open-gate and close-gate conformations leads to a dynamic regulation of the 20S proteasome proteolysis activity. Component of the proteasome core, a large protease complex with broad specificity involved in protein degradation. The protein is Proteasome subunit alpha of Metallosphaera sedula (strain ATCC 51363 / DSM 5348 / JCM 9185 / NBRC 15509 / TH2).